The following is a 385-amino-acid chain: Glucans biosynthesis protein C (385 aa).

10 consecutive transmembrane segments (helical) span residues 17 to 37 (AWLM…SHTW), 60 to 80 (MQVF…RYPL), 91 to 111 (VGIP…IMLQ), 137 to 157 (ISHL…VWIF), 173 to 193 (KFSM…YAVI), 212 to 232 (FIVM…LAFI), 239 to 259 (LFTT…VAYL), 274 to 294 (TESV…FSFG), 311 to 331 (ASLF…AYIT), and 338 to 358 (WLGF…LYEI).

Belongs to the acyltransferase 3 family. OpgC subfamily.

The protein resides in the cell membrane. It functions in the pathway glycan metabolism; osmoregulated periplasmic glucan (OPG) biosynthesis. In terms of biological role, necessary for the succinyl substitution of periplasmic glucans. Could catalyze the transfer of succinyl residues from the cytoplasmic side of the membrane to the nascent glucan backbones on the periplasmic side of the membrane. The chain is Glucans biosynthesis protein C from Escherichia coli O17:K52:H18 (strain UMN026 / ExPEC).